A 343-amino-acid chain; its full sequence is Anthranilate phosphoribosyltransferase (343 aa).

Residues Gly84, 87–88, Thr92, 94–97, 112–120, and Ser124 contribute to the 5-phospho-alpha-D-ribose 1-diphosphate site; these read GD, NIST, and KHGNRSVSS. An anthranilate-binding site is contributed by Gly84. Position 96 (Ser96) interacts with Mg(2+). Asn115 is a binding site for anthranilate. Arg170 lines the anthranilate pocket. Asp229 and Glu230 together coordinate Mg(2+).

It belongs to the anthranilate phosphoribosyltransferase family. Homodimer. The cofactor is Mg(2+).

It carries out the reaction N-(5-phospho-beta-D-ribosyl)anthranilate + diphosphate = 5-phospho-alpha-D-ribose 1-diphosphate + anthranilate. It participates in amino-acid biosynthesis; L-tryptophan biosynthesis; L-tryptophan from chorismate: step 2/5. In terms of biological role, catalyzes the transfer of the phosphoribosyl group of 5-phosphorylribose-1-pyrophosphate (PRPP) to anthranilate to yield N-(5'-phosphoribosyl)-anthranilate (PRA). The protein is Anthranilate phosphoribosyltransferase of Stenotrophomonas maltophilia (strain R551-3).